The chain runs to 395 residues: uncharacterized protein (395 aa).

Disordered regions lie at residues 185-282 (RREV…SSTA) and 316-372 (GSST…TCSS). Positions 248 to 257 (LHLRTRHPHR) are enriched in basic residues. A compositionally biased stretch (low complexity) spans 342-360 (ARASTHSRSSPSASANSRY).

This is an uncharacterized protein from Streptomyces fradiae (Streptomyces roseoflavus).